We begin with the raw amino-acid sequence, 309 residues long: Dehydrogenase/reductase SDR family member 7B (309 aa).

The Cytoplasmic segment spans residues 1–4 (MDLT). The chain crosses the membrane as a helical; Signal-anchor for type II membrane protein span at residues 5–25 (TWAIFPLLLGSIGVYSLYKLL). The Lumenal portion of the chain corresponds to 26–272 (QRLRSGAYLQ…AVGERRKELL (247 aa)). Residues Ser-46 and Leu-48 each contribute to the NAD(+) site. Ser-178 is a substrate binding site. NAD(+) contacts are provided by Tyr-191, Lys-195, and Thr-226. Tyr-191 acts as the Proton acceptor in catalysis.

Belongs to the short-chain dehydrogenases/reductases (SDR) family.

The protein localises to the endoplasmic reticulum membrane. In terms of biological role, putative oxidoreductase. The chain is Dehydrogenase/reductase SDR family member 7B (dhrs7b) from Xenopus tropicalis (Western clawed frog).